The sequence spans 140 residues: Ribonuclease P protein subunit p20 (140 aa).

The protein belongs to the histone-like Alba family. In terms of assembly, component of nuclear RNase P and RNase MRP complexes. RNase P consists of a catalytic RNA moiety and 10 different protein chains; POP1, POP4, POP5, POP7, RPP14, RPP21, RPP25, RPP30, RPP38 and RPP40. Within the RNase P complex, POP1, POP7 and RPP25 form the 'finger' subcomplex, POP5, RPP14, RPP40 and homodimeric RPP30 form the 'palm' subcomplex, and RPP21, POP4 and RPP38 form the 'wrist' subcomplex. All subunits of the RNase P complex interact with the catalytic RNA. Several subunits of RNase P are also part of the RNase MRP complex. RNase MRP consists of a catalytic RNA moiety and about 8 protein subunits; POP1, POP7, RPP25, RPP30, RPP38, RPP40 and possibly also POP4 and POP5. Interacts with SMN1. POP7 forms a heterodimer with RPP25 that binds to the P3 stem loop of the catalytic RNA.

Its subcellular location is the nucleus. The protein resides in the nucleolus. The protein localises to the cytoplasm. It is found in the cytoplasmic granule. In terms of biological role, component of ribonuclease P, a ribonucleoprotein complex that generates mature tRNA molecules by cleaving their 5'-ends. Also a component of the MRP ribonuclease complex, which cleaves pre-rRNA sequences. In Mus musculus (Mouse), this protein is Ribonuclease P protein subunit p20 (Pop7).